An 826-amino-acid polypeptide reads, in one-letter code: 1,4-alpha-glucan-branching enzyme 1, chloroplastic/amyloplastic (826 aa).

The transit peptide at 1–58 directs the protein to the chloroplast; the sequence is ATTTTTTHNSKNKQYLAKQKPVELTLGYQNPNGCKVCSFGSKGSIYQKVSSGFKGVSV. The active-site Nucleophile is Asp409. The active-site Proton donor is the Glu464. Residues 782-813 are disordered; it reads DTDVARIPDVSMESEDSNLDRIEDNSEDAVDA.

The protein belongs to the glycosyl hydrolase 13 family. GlgB subfamily. In terms of assembly, monomer. Expressed in roots, leaves, stipules, pods and flowers.

The protein resides in the plastid. It is found in the chloroplast. It localises to the amyloplast. It carries out the reaction Transfers a segment of a (1-&gt;4)-alpha-D-glucan chain to a primary hydroxy group in a similar glucan chain.. It participates in glycan biosynthesis; starch biosynthesis. Functionally, catalyzes the formation of the alpha-1,6-glucosidic linkages in starch by scission of a 1,4-alpha-linked oligosaccharide from growing alpha-1,4-glucan chains and the subsequent attachment of the oligosaccharide to the alpha-1,6 position. May preferentially transfer long chains during branching. In Pisum sativum (Garden pea), this protein is 1,4-alpha-glucan-branching enzyme 1, chloroplastic/amyloplastic (SBEII).